The sequence spans 146 residues: Universal stress protein MT1672 (146 aa).

The protein belongs to the universal stress protein A family.

In Mycobacterium tuberculosis (strain CDC 1551 / Oshkosh), this protein is Universal stress protein MT1672.